The following is a 44-amino-acid chain: Unknown protein 9 (44 aa).

This Pseudotsuga menziesii (Douglas-fir) protein is Unknown protein 9.